A 303-amino-acid chain; its full sequence is Methionyl-tRNA formyltransferase (303 aa).

108-111 (SDLP) lines the (6S)-5,6,7,8-tetrahydrofolate pocket.

It belongs to the Fmt family.

The catalysed reaction is L-methionyl-tRNA(fMet) + (6R)-10-formyltetrahydrofolate = N-formyl-L-methionyl-tRNA(fMet) + (6S)-5,6,7,8-tetrahydrofolate + H(+). Attaches a formyl group to the free amino group of methionyl-tRNA(fMet). The formyl group appears to play a dual role in the initiator identity of N-formylmethionyl-tRNA by promoting its recognition by IF2 and preventing the misappropriation of this tRNA by the elongation apparatus. This chain is Methionyl-tRNA formyltransferase, found in Rickettsia felis (strain ATCC VR-1525 / URRWXCal2) (Rickettsia azadi).